The sequence spans 30 residues: Large ribosomal subunit protein bL25 (30 aa).

This sequence belongs to the bacterial ribosomal protein bL25 family. As to quaternary structure, part of the 50S ribosomal subunit; part of the 5S rRNA/L5/L18/L25 subcomplex. Contacts the 5S rRNA. Binds to the 5S rRNA independently of L5 and L18.

Its function is as follows. This is one of the proteins that binds to the 5S RNA in the ribosome where it forms part of the central protuberance. The sequence is that of Large ribosomal subunit protein bL25 (rplY) from Anabaena variabilis.